A 129-amino-acid polypeptide reads, in one-letter code: Glycine cleavage system H protein (129 aa).

In terms of domain architecture, Lipoyl-binding spans 24-106 (TYTVGITEHA…YAGGWIFKIK (83 aa)). Lys-65 is modified (N6-lipoyllysine).

The protein belongs to the GcvH family. As to quaternary structure, the glycine cleavage system is composed of four proteins: P, T, L and H. It depends on (R)-lipoate as a cofactor.

The glycine cleavage system catalyzes the degradation of glycine. The H protein shuttles the methylamine group of glycine from the P protein to the T protein. This is Glycine cleavage system H protein from Citrobacter koseri (strain ATCC BAA-895 / CDC 4225-83 / SGSC4696).